The sequence spans 471 residues: Soluble pyridine nucleotide transhydrogenase (471 aa).

41–50 (EREPSVGGGC) is an FAD binding site.

The protein belongs to the class-I pyridine nucleotide-disulfide oxidoreductase family. The cofactor is FAD.

It localises to the cytoplasm. It catalyses the reaction NAD(+) + NADPH = NADH + NADP(+). Functionally, conversion of NADPH, generated by peripheral catabolic pathways, to NADH, which can enter the respiratory chain for energy generation. The polypeptide is Soluble pyridine nucleotide transhydrogenase (Aliivibrio fischeri (strain ATCC 700601 / ES114) (Vibrio fischeri)).